We begin with the raw amino-acid sequence, 962 residues long: Integrator complex subunit 7 (962 aa).

2 positions are modified to phosphoserine: Ser-338 and Ser-809.

Belongs to the Integrator subunit 7 family. In terms of assembly, component of the Integrator complex, composed of core subunits INTS1, INTS2, INTS3, INTS4, INTS5, INTS6, INTS7, INTS8, INTS9/RC74, INTS10, INTS11/CPSF3L, INTS12, INTS13, INTS14 and INTS15. The core complex associates with protein phosphatase 2A subunits PPP2CA and PPP2R1A, to form the Integrator-PP2A (INTAC) complex. Interacts with NABP2.

The protein localises to the nucleus. It localises to the chromosome. Its subcellular location is the cytoplasm. In terms of biological role, component of the integrator complex, a multiprotein complex that terminates RNA polymerase II (Pol II) transcription in the promoter-proximal region of genes. The integrator complex provides a quality checkpoint during transcription elongation by driving premature transcription termination of transcripts that are unfavorably configured for transcriptional elongation: the complex terminates transcription by (1) catalyzing dephosphorylation of the C-terminal domain (CTD) of Pol II subunit POLR2A/RPB1 and SUPT5H/SPT5, (2) degrading the exiting nascent RNA transcript via endonuclease activity and (3) promoting the release of Pol II from bound DNA. The integrator complex is also involved in terminating the synthesis of non-coding Pol II transcripts, such as enhancer RNAs (eRNAs), small nuclear RNAs (snRNAs), telomerase RNAs and long non-coding RNAs (lncRNAs). May be not involved in the recruitment of cytoplasmic dynein to the nuclear envelope by different components of the INT complex. Plays a role in DNA damage response (DDR) signaling during the S phase. The sequence is that of Integrator complex subunit 7 (INTS7) from Bos taurus (Bovine).